Reading from the N-terminus, the 380-residue chain is uncharacterized protein (380 aa).

The signal sequence occupies residues 1–18 (MALRHLALLAGLLVGVAS). Asn104, Asn111, and Asn128 each carry an N-linked (GlcNAc...) asparagine glycan. The helical transmembrane segment at 148 to 168 (LFLGTFFISSGLILSVAGFFY) threads the bilayer. 2 disordered regions span residues 229 to 256 (PQTGLPGSGSRPPLPGSPGDPPTRQGQG) and 336 to 380 (RFSG…ISNV). Residues 240 to 249 (PPLPGSPGDP) are compositionally biased toward pro residues. Residues 356–366 (VRRERPLDRAT) show a composition bias toward basic and acidic residues.

It localises to the membrane. This is an uncharacterized protein from Homo sapiens (Human).